A 304-amino-acid polypeptide reads, in one-letter code: MSQQLSPINIETKKAISNARLKPLNIHYNESKPTTIQNTGKLVRINFKGGYLSGGFLPNEYVLSSLHIYWGKEDDYGSNHLIDVYKYSGEINLVHWNKKKYSSYEEAKKHDDGLIIISIFLQVSDHKNVYFQKIVNQLDSIRTANTSAPFDSVFYLDNLLPSKLDYFKYLGTTINHSADAVWIIFPTPINIHSDQLSKFRTLLSLSNHEGKPHYITENYRNPYKLNDDTEVYYSGEIIRAATTSPARENYFMRWLSDLRETCFSYYQKYIEGNKTFAIIAIVFVYILTAILFLMSRRYSREKQN.

Positions 1–235 (MSQQLSPINI…NDDTEVYYSG (235 aa)) constitute an Alpha-carbonic anhydrase domain. Topologically, residues 1-275 (MSQQLSPINI…YQKYIEGNKT (275 aa)) are virion surface. Residues 276-294 (FAIIAIVFVYILTAILFLM) traverse the membrane as a helical segment. The Intravirion segment spans residues 295-304 (SRRYSREKQN).

Belongs to the alpha-carbonic anhydrase family. In terms of assembly, homodimer; disulfide-linked. Apparently non-glycosylated.

Its subcellular location is the virion membrane. Functionally, binds to chondroitin sulfate on the cell surface to provide virion attachment to target cell. The protein is Cell surface-binding protein OPG105 (OPG105) of Homo sapiens (Human).